The chain runs to 205 residues: Holliday junction branch migration complex subunit RuvA (205 aa).

The segment at 1 to 64 (MIGRLNGILV…EDAQLLFGFN (64 aa)) is domain I. Residues 65-143 (NKVERALFRE…NWGNDLFTPF (79 aa)) form a domain II region. Positions 144-156 (SDSAVIEPFSDAT) are flexible linker. A domain III region spans residues 157-205 (IANNAADDAVSALVSLGYKLPQAQKAVKSVSKPDMSTEVLIKESLKSML).

This sequence belongs to the RuvA family. As to quaternary structure, homotetramer. Forms an RuvA(8)-RuvB(12)-Holliday junction (HJ) complex. HJ DNA is sandwiched between 2 RuvA tetramers; dsDNA enters through RuvA and exits via RuvB. An RuvB hexamer assembles on each DNA strand where it exits the tetramer. Each RuvB hexamer is contacted by two RuvA subunits (via domain III) on 2 adjacent RuvB subunits; this complex drives branch migration. In the full resolvosome a probable DNA-RuvA(4)-RuvB(12)-RuvC(2) complex forms which resolves the HJ.

Its subcellular location is the cytoplasm. Functionally, the RuvA-RuvB-RuvC complex processes Holliday junction (HJ) DNA during genetic recombination and DNA repair, while the RuvA-RuvB complex plays an important role in the rescue of blocked DNA replication forks via replication fork reversal (RFR). RuvA specifically binds to HJ cruciform DNA, conferring on it an open structure. The RuvB hexamer acts as an ATP-dependent pump, pulling dsDNA into and through the RuvAB complex. HJ branch migration allows RuvC to scan DNA until it finds its consensus sequence, where it cleaves and resolves the cruciform DNA. This Pseudoalteromonas translucida (strain TAC 125) protein is Holliday junction branch migration complex subunit RuvA.